A 354-amino-acid chain; its full sequence is Dihydroorotate dehydrogenase (quinone) (354 aa).

FMN contacts are provided by residues 70–74 (AGFDK) and Thr-94. Residue Lys-74 participates in substrate binding. 119–123 (NAMGF) is a substrate binding site. FMN contacts are provided by Asn-148 and Asn-181. Asn-181 is a substrate binding site. The active-site Nucleophile is Ser-184. Asn-186 lines the substrate pocket. FMN contacts are provided by Lys-217 and Thr-245. Substrate is bound at residue 246–247 (NT). Residues Gly-265, Gly-294, and 315-316 (YS) contribute to the FMN site.

The protein belongs to the dihydroorotate dehydrogenase family. Type 2 subfamily. Monomer. The cofactor is FMN.

Its subcellular location is the cell membrane. It catalyses the reaction (S)-dihydroorotate + a quinone = orotate + a quinol. The protein operates within pyrimidine metabolism; UMP biosynthesis via de novo pathway; orotate from (S)-dihydroorotate (quinone route): step 1/1. In terms of biological role, catalyzes the conversion of dihydroorotate to orotate with quinone as electron acceptor. In Sulfurovum sp. (strain NBC37-1), this protein is Dihydroorotate dehydrogenase (quinone).